The primary structure comprises 191 residues: Dephospho-CoA kinase (191 aa).

The DPCK domain occupies 3-191 (AIGITGSYAS…KLIKDLECRV (189 aa)). 11–16 (ASGKTF) lines the ATP pocket.

This sequence belongs to the CoaE family.

The protein resides in the cytoplasm. It carries out the reaction 3'-dephospho-CoA + ATP = ADP + CoA + H(+). The protein operates within cofactor biosynthesis; coenzyme A biosynthesis; CoA from (R)-pantothenate: step 5/5. Catalyzes the phosphorylation of the 3'-hydroxyl group of dephosphocoenzyme A to form coenzyme A. This Rickettsia conorii (strain ATCC VR-613 / Malish 7) protein is Dephospho-CoA kinase.